Here is a 65-residue protein sequence, read N- to C-terminus: Large ribosomal subunit protein bL35 (65 aa).

The segment covering 1–45 (MPKMKSHSGAKKRFKKTGNGKIKRKKANKGHLLTKKNAKRKRQLR) has biased composition (basic residues). The interval 1-65 (MPKMKSHSGA…RDRIKRMLST (65 aa)) is disordered. Over residues 48–57 (VVVDDKANRD) the composition is skewed to basic and acidic residues.

It belongs to the bacterial ribosomal protein bL35 family.

The sequence is that of Large ribosomal subunit protein bL35 from Salinibacter ruber (strain DSM 13855 / M31).